The sequence spans 139 residues: Protein spalt-accessory (139 aa).

Residues 1–16 form the signal peptide; that stretch reads MKLLIALLALVTAAIA. Gly residues predominate over residues 60-75; it reads GIGQGGVHPGQGGFAG. Residues 60-139 are disordered; sequence GIGQGGVHPG…HHEHHGHHRH (80 aa). The span at 109–121 shows a compositional bias: basic and acidic residues; the sequence is NPHEYPEHHGEHH. A compositionally biased stretch (basic residues) spans 122–139; sequence REHHEHHGHHEHHGHHRH.

It is found in the secreted. Its function is as follows. Likely to be involved in the establishment of the head. The sequence is that of Protein spalt-accessory (sala) from Drosophila simulans (Fruit fly).